Reading from the N-terminus, the 429-residue chain is Adenylosuccinate synthetase (429 aa).

GTP contacts are provided by residues 12–18 (GDEGKGK) and 40–42 (GHT). Asp-13 (proton acceptor) is an active-site residue. Mg(2+) is bound by residues Asp-13 and Gly-40. Residues 13–16 (DEGK), 38–41 (NAGH), Thr-129, Arg-143, Gln-223, Thr-238, and Arg-302 contribute to the IMP site. His-41 (proton donor) is an active-site residue. Residue 298–304 (VVTGRKR) participates in substrate binding. Residues Arg-304, 330–332 (KLD), and 412–414 (STS) contribute to the GTP site.

It belongs to the adenylosuccinate synthetase family. Homodimer. Mg(2+) serves as cofactor.

It localises to the cytoplasm. The catalysed reaction is IMP + L-aspartate + GTP = N(6)-(1,2-dicarboxyethyl)-AMP + GDP + phosphate + 2 H(+). It functions in the pathway purine metabolism; AMP biosynthesis via de novo pathway; AMP from IMP: step 1/2. Functionally, plays an important role in the de novo pathway of purine nucleotide biosynthesis. Catalyzes the first committed step in the biosynthesis of AMP from IMP. In Brucella ovis (strain ATCC 25840 / 63/290 / NCTC 10512), this protein is Adenylosuccinate synthetase.